A 116-amino-acid chain; its full sequence is MSDKKISRLRRAKKTRYKIRELGVDRLSINRTPRHIYAQIISADGSKVLATASTLDKDLRAGATGNVEAAGKVGAMIAERAKAAGITKVAFDRSGFKYHGRVKALADAARENGLEF.

This sequence belongs to the universal ribosomal protein uL18 family. As to quaternary structure, part of the 50S ribosomal subunit; part of the 5S rRNA/L5/L18/L25 subcomplex. Contacts the 5S and 23S rRNAs.

In terms of biological role, this is one of the proteins that bind and probably mediate the attachment of the 5S RNA into the large ribosomal subunit, where it forms part of the central protuberance. This is Large ribosomal subunit protein uL18 from Hahella chejuensis (strain KCTC 2396).